We begin with the raw amino-acid sequence, 292 residues long: Phosphoribulokinase 2 (292 aa).

An ATP-binding site is contributed by 12 to 20; it reads GSSGAGTST.

It belongs to the phosphoribulokinase family.

The catalysed reaction is D-ribulose 5-phosphate + ATP = D-ribulose 1,5-bisphosphate + ADP + H(+). Its pathway is carbohydrate biosynthesis; Calvin cycle. The polypeptide is Phosphoribulokinase 2 (prkB) (Cereibacter sphaeroides (Rhodobacter sphaeroides)).